The sequence spans 94 residues: MAAKILALWLLLAGTVFPQGCCQHWSYGLSPGGKRDLDNFSDTLGNMVEEFPRVEAPCSVFGCAEESPFAKMYRVKGLLASVAERENGHRTFKK.

The first 22 residues, 1–22, serve as a signal peptide directing secretion; sequence MAAKILALWLLLAGTVFPQGCC. Glutamine 23 carries the pyrrolidone carboxylic acid modification. Glycine 32 is modified (glycine amide).

This sequence belongs to the GnRH family. In terms of tissue distribution, synthesized in preoptic neurons and is transported to the pituitary in the preoptic-hypophyseal axons.

The protein resides in the secreted. Stimulates the secretion of gonadotropins. May be responsible for the regulation of the hypothalamic-pituitary-gonadal axis. The chain is Progonadoliberin-1 (gnrh1) from Haplochromis burtoni (Burton's mouthbrooder).